Here is a 275-residue protein sequence, read N- to C-terminus: Fos-related antigen 1 (275 aa).

Disordered stretches follow at residues 1–33 (MYRD…QTVQ) and 71–115 (TYPQ…VRRE). The span at 7–33 (EPGPSSGAGSAYGRPAQPQQAQTQTVQ) shows a compositional bias: low complexity. A bZIP domain is found at 107-170 (EERRRVRRER…ERLELVLEAH (64 aa)). Residues 109–129 (RRRVRRERNKLAAAKCRNRRK) are basic motif. The tract at residues 135–163 (LQAETDKLEDEKSGLQREIEELQKQKERL) is leucine-zipper. A compositionally biased stretch (basic and acidic residues) spans 171 to 184 (RPICKIPEEDKKDT). The segment at 171-275 (RPICKIPEED…PLGSPTLLAL (105 aa)) is disordered. 3 stretches are compositionally biased toward low complexity: residues 185 to 194 (GGTSSTSGAG), 219 to 237 (LHTP…TPSL), and 256 to 275 (SSSS…LLAL). S269 is subject to Phosphoserine.

The protein belongs to the bZIP family. Fos subfamily. Heterodimer. Interacts with the BAF multiprotein chromatin-remodeling complex subunits SMARCB1 and SMARCD1. Interacts with ARID1A and JUN.

The protein resides in the nucleus. The sequence is that of Fos-related antigen 1 (Fosl1) from Rattus norvegicus (Rat).